We begin with the raw amino-acid sequence, 338 residues long: Cell division protein ZipA (338 aa).

The Periplasmic segment spans residues 1–2 (MS). The chain crosses the membrane as a helical span at residues 3 to 23 (LREWLIAIGTLVIIGIVIDGV). At 24–338 (RRMRRARKES…FERKQRSQRA (315 aa)) the chain is on the cytoplasmic side. Positions 33-192 (SMAISSGMGA…RKNQPLAGAN (160 aa)) are disordered. 2 stretches are compositionally biased toward basic and acidic residues: residues 70 to 81 (TLEDRGYLKRDM) and 138 to 162 (EVDR…RAEE).

This sequence belongs to the ZipA family. As to quaternary structure, interacts with FtsZ via their C-terminal domains.

The protein localises to the cell inner membrane. Functionally, essential cell division protein that stabilizes the FtsZ protofilaments by cross-linking them and that serves as a cytoplasmic membrane anchor for the Z ring. Also required for the recruitment to the septal ring of downstream cell division proteins. This chain is Cell division protein ZipA, found in Marinobacter nauticus (strain ATCC 700491 / DSM 11845 / VT8) (Marinobacter aquaeolei).